We begin with the raw amino-acid sequence, 242 residues long: uncharacterized protein (242 aa).

The HTH gntR-type domain occupies 8–76; sequence TPLYIQLKQI…QGKGTFVKSP (69 aa). The segment at residues 36-55 is a DNA-binding region (H-T-H motif); the sequence is ENELCTKYNVSRITVRKAIL.

This is an uncharacterized protein from Bacillus subtilis (strain 168).